The sequence spans 215 residues: MTVQKFITYNSVDINGKTLSDEYKLELNVLEKSGNYLIHKDILRHQSSQRQGTISTKTRSEVRGGGRKPWRQKGTGRARAGSSRSPLWKGGGVIFGPKPRKIILKLNKKERKLALQTLLYNKRNNISIIDNLETNLDLPKTKTFYSLCKNCEINLDQKILIIVGEKTIPLKLATRNIKNVELILASNLNTFSLLKAKQILMTPLAVKDIKEIYCG.

Residues 48–57 (SQRQGTISTK) are compositionally biased toward polar residues. A disordered region spans residues 48–85 (SQRQGTISTKTRSEVRGGGRKPWRQKGTGRARAGSSRS). Residues 65 to 76 (GGRKPWRQKGTG) show a composition bias toward basic residues.

The protein belongs to the universal ribosomal protein uL4 family. In terms of assembly, part of the 50S ribosomal subunit.

The protein resides in the plastid. It is found in the chloroplast. In terms of biological role, probably binds the 23S rRNA. The chain is Large ribosomal subunit protein uL4c (rpl4) from Trieres chinensis (Marine centric diatom).